Here is a 456-residue protein sequence, read N- to C-terminus: MANAVGRRSWAALRLCAAVILLDLAVCKGFVEDLNESFKDNRKDDIWLVDFYAPWCGHCKKLEPIWNEVGLEMKSIGSPVKVGKMDATSYSSIASEFGVRGYPTIKLLKGDLAYNYRGPRTKDDIIEFAHRVSGALIRPLPSQQMFDHVRKRHRVFFVYIGGESPLKEKYIDAASELIVYTYFFSASEDVVPEYVTLKEMPAVLVFKDDTYFVYDEYEDGDLSSWISRERFQNYLTMDGFLLYELGDTGKLVAIAVIDEKNTSLEHTRLKSIIQEVARDFRDHFHRDFQFGHMDGNDYINTLLMDELTVPTIVVLNTSNQQYFLLDRHIKDASDMVQFINSILDGTVPAQGGDSIFQRLKRIVFDAKSTIVSIFKSSPLMGCFLFGLPLGVISIMCYGIYTADTDGGYIEERYEVSKSEMENQEQIEESKEQESSSGGSLAPTVQEPKDVLEKKKD.

The N-terminal stretch at 1–29 is a signal peptide; sequence MANAVGRRSWAALRLCAAVILLDLAVCKG. Positions 30-131 constitute a Thioredoxin domain; that stretch reads FVEDLNESFK…KDDIIEFAHR (102 aa). At 30 to 378 the chain is on the lumenal side; it reads FVEDLNESFK…TIVSIFKSSP (349 aa). Asparagine 35 carries N-linked (GlcNAc...) asparagine glycosylation. Residues cysteine 56 and cysteine 59 each act as nucleophile in the active site. A disulfide bridge links cysteine 56 with cysteine 59. Asparagine 261 and asparagine 316 each carry an N-linked (GlcNAc...) asparagine glycan. Residues 379–399 traverse the membrane as a helical segment; the sequence is LMGCFLFGLPLGVISIMCYGI. Residues 400–456 lie on the Cytoplasmic side of the membrane; the sequence is YTADTDGGYIEERYEVSKSEMENQEQIEESKEQESSSGGSLAPTVQEPKDVLEKKKD. Residues 416–456 form a disordered region; it reads SKSEMENQEQIEESKEQESSSGGSLAPTVQEPKDVLEKKKD. A compositionally biased stretch (basic and acidic residues) spans 446–456; sequence EPKDVLEKKKD. The Di-lysine motif motif lies at 453–456; the sequence is KKKD.

It belongs to the protein disulfide isomerase family.

The protein resides in the endoplasmic reticulum membrane. It carries out the reaction Catalyzes the rearrangement of -S-S- bonds in proteins.. Functionally, probable disulfide isomerase, which participates in the folding of proteins containing disulfide bonds. May act as a dithiol oxidase. Acts as a regulator of endoplasmic reticulum-mitochondria contact sites via its ability to regulate redox signals. The chain is Protein disulfide-isomerase TMX3 (Tmx3) from Mus musculus (Mouse).